The primary structure comprises 467 residues: Ankyrin repeat and SOCS box protein 10 (467 aa).

ANK repeat units follow at residues 115–144 (ELTTPLHVAASRGHTEVLELLLRRRAKPDS), 147–176 (GGRTALHEACSAGHAACVRVLLVAGADPNT), 180–209 (DGKRPLHLCRGPGILECVELLLKFGAQVDG), 214–243 (EEETPLHIAARLGHVELADLLLRWGACPDV), 247–289 (EGWT…DADA), 293–322 (DKQRPLHLACRHGHSAVVQLLLSCGVNANA), and 326–361 (GGHTPLHCALLGPTTAVAHSPEHTVRDLLNHGAVRV). Residues 412–467 (YSSLFALVRQPRSLQHLCRCALRSHLEGCLPHALPRLPLPPRMLRFLQLDFEDLLY) form the SOCS box domain.

It belongs to the ankyrin SOCS box (ASB) family.

It is found in the nucleus. Its subcellular location is the cytoplasm. It participates in protein modification; protein ubiquitination. May be a substrate-recognition component of a SCF-like ECS (Elongin-Cullin-SOCS-box protein) E3 ubiquitin-protein ligase complex which mediates the ubiquitination and subsequent proteasomal degradation of target proteins. The chain is Ankyrin repeat and SOCS box protein 10 (Asb10) from Mus musculus (Mouse).